The sequence spans 227 residues: Indole-3-glycerol phosphate synthase (227 aa).

This sequence belongs to the TrpC family.

The catalysed reaction is 1-(2-carboxyphenylamino)-1-deoxy-D-ribulose 5-phosphate + H(+) = (1S,2R)-1-C-(indol-3-yl)glycerol 3-phosphate + CO2 + H2O. Its pathway is amino-acid biosynthesis; L-tryptophan biosynthesis; L-tryptophan from chorismate: step 4/5. The chain is Indole-3-glycerol phosphate synthase (trpC) from Thermococcus kodakarensis (strain ATCC BAA-918 / JCM 12380 / KOD1) (Pyrococcus kodakaraensis (strain KOD1)).